A 267-amino-acid chain; its full sequence is Ribosomal RNA small subunit methyltransferase A (267 aa).

Positions 13, 15, 40, 61, 85, and 105 each coordinate S-adenosyl-L-methionine.

The protein belongs to the class I-like SAM-binding methyltransferase superfamily. rRNA adenine N(6)-methyltransferase family. RsmA subfamily.

Its subcellular location is the cytoplasm. The enzyme catalyses adenosine(1518)/adenosine(1519) in 16S rRNA + 4 S-adenosyl-L-methionine = N(6)-dimethyladenosine(1518)/N(6)-dimethyladenosine(1519) in 16S rRNA + 4 S-adenosyl-L-homocysteine + 4 H(+). In terms of biological role, specifically dimethylates two adjacent adenosines (A1518 and A1519) in the loop of a conserved hairpin near the 3'-end of 16S rRNA in the 30S particle. May play a critical role in biogenesis of 30S subunits. This is Ribosomal RNA small subunit methyltransferase A from Bacteroides thetaiotaomicron (strain ATCC 29148 / DSM 2079 / JCM 5827 / CCUG 10774 / NCTC 10582 / VPI-5482 / E50).